Consider the following 340-residue polypeptide: tRNA-cytidine(32) 2-sulfurtransferase (340 aa).

The PP-loop motif motif lies at 74 to 79; it reads SGGKDS. Positions 149, 152, and 240 each coordinate [4Fe-4S] cluster.

It belongs to the TtcA family. In terms of assembly, homodimer. It depends on Mg(2+) as a cofactor. Requires [4Fe-4S] cluster as cofactor.

It localises to the cytoplasm. The enzyme catalyses cytidine(32) in tRNA + S-sulfanyl-L-cysteinyl-[cysteine desulfurase] + AH2 + ATP = 2-thiocytidine(32) in tRNA + L-cysteinyl-[cysteine desulfurase] + A + AMP + diphosphate + H(+). It functions in the pathway tRNA modification. Its function is as follows. Catalyzes the ATP-dependent 2-thiolation of cytidine in position 32 of tRNA, to form 2-thiocytidine (s(2)C32). The sulfur atoms are provided by the cysteine/cysteine desulfurase (IscS) system. The sequence is that of tRNA-cytidine(32) 2-sulfurtransferase from Burkholderia ambifaria (strain MC40-6).